A 676-amino-acid polypeptide reads, in one-letter code: Envelope glycoprotein (676 aa).

A signal peptide spans 1–32; that stretch reads MGGLSLLQLPRDKFRKSSFFVWVIILFQKAFS. Positions 33–185 are receptor binding; sequence MPLGVVTNST…FAEGVIAFLI (153 aa). Topologically, residues 33-650 are extracellular; it reads MPLGVVTNST…DDNWWTGWRQ (618 aa). Asparagine 40 is a glycosylation site (N-linked (GlcNAc...) asparagine; by host). 5 cysteine pairs are disulfide-bonded: cysteine 53–cysteine 609, cysteine 108–cysteine 135, cysteine 121–cysteine 147, cysteine 511–cysteine 556, and cysteine 601–cysteine 608. Asparagine 204, asparagine 208, asparagine 238, asparagine 257, asparagine 268, asparagine 296, asparagine 314, and asparagine 366 each carry an N-linked (GlcNAc...) asparagine; by host glycan. Positions 305-485 are mucin-like region; that stretch reads ELSFEALSLN…STSNGLITST (181 aa). 2 disordered regions span residues 337–373 and 404–461; these read RKYSDLVPKNSPGMVPLHIPEGETTLPSQNSTEGRRV and RPSS…LTTP. 2 stretches are compositionally biased toward low complexity: residues 405 to 428 and 449 to 461; these read PSSSQIPSSSPTTAPSPEAQTPTT and PGPTTEAPTLTTP. The N-linked (GlcNAc...) asparagine; by host glycan is linked to asparagine 463. Residues 524–539 form a fusion peptide region; it reads HNAAGIAWIPYFGPGA. Residues 554–595 adopt a coiled-coil conformation; it reads LVCGLRQLANETTQALQLFLRATTELRTYTILNRKAIDFLLR. Residue asparagine 563 is glycosylated (N-linked (GlcNAc...) asparagine; by host). Residues 615-634 are a coiled coil; the sequence is WTKNITDKINQIIHDFIDNP. N-linked (GlcNAc...) asparagine; by host glycosylation is present at asparagine 618. The chain crosses the membrane as a helical span at residues 651 to 671; the sequence is WIPAGIGITGIIIAIIALLCV. Residues cysteine 670 and cysteine 672 are each lipidated (S-palmitoyl cysteine; by host). At 672–676 the chain is on the cytoplasmic side; the sequence is CKLLC.

It belongs to the filoviruses glycoprotein family. In terms of assembly, homotrimer; each monomer consists of a GP1 and a GP2 subunit linked by disulfide bonds. The resulting peplomers (GP1,2) protrude from the virus surface as spikes. Interacts with host integrin alpha-V/ITGAV. Interacts with host CLEC10A. Binds also to host CD209 and CLEC4M/DC-SIGN(R). Interacts with host FOLR1. Interacts with BST2; this interaction inhibits the antiviral effect of BST2 and this allows viral release from infected cells. Interacts with host FCN1; this interaction enhances viral entry. Interacts with host TLR4; this interaction induces cell death in T-lymphocytes or proinflammatory cytokines and SOCS1 production in monocytes. Interacts with host entry receptor NPC1. As to quaternary structure, GP1 and GP2delta are part of GP1,2delta soluble complexes released by ectodomain shedding. N-glycosylated. Post-translationally, O-glycosylated in the mucin-like region. In terms of processing, palmitoylation of GP2 is not required for its function. Specific enzymatic cleavages in vivo yield mature proteins. The precursor is processed into GP1 and GP2 by host cell furin in the trans Golgi, and maybe by other host proteases, to yield the mature GP1 and GP2 proteins. The cleavage site corresponds to the furin optimal cleavage sequence [KR]-X-[KR]-R. This cleavage does not seem to be required for function. After the internalization of the virus into cell endosomes, GP1 C-terminus is removed by the endosomal proteases cathepsin B, cathepsin L, or both, leaving a 19-kDa N-terminal fragment which is further digested by cathepsin B. Proteolytic processing of GP1,2 by host ADAM17 can remove the transmembrane anchor of GP2 and leads to shedding of complexes consisting in GP1 and truncated GP2 (GP1,2delta).

Its subcellular location is the virion membrane. It is found in the host cell membrane. The protein localises to the secreted. Functionally, trimeric GP1,2 complexes form the virion surface spikes and mediate the viral entry processes, with GP1 acting as the receptor-binding subunit and GP2 as the membrane fusion subunit. At later times of infection, down-regulates the expression of various host cell surface molecules that are essential for immune surveillance and cell adhesion. Down-modulates several integrins including ITGA1, ITGA2, ITGA3, ITGA4, ITGA5, ITGA6, ITGAV and ITGB1. This decrease in cell adhesion molecules may lead to cell detachment, contributing to the disruption of blood vessel integrity and hemorrhages developed during infection (cytotoxicity). Interacts with host TLR4 and thereby stimulates the differentiation and activation of monocytes leading to bystander death of T-lymphocytes. Down-regulates as well the function of host natural killer cells. Counteracts the antiviral effect of host BST2/tetherin that restricts release of progeny virions from infected cells. However, cooperates with VP40 and host BST2 to activate canonical NF-kappa-B pathway in a manner dependent on neddylation. Its function is as follows. Functions as a decoy for anti-GP1,2 antibodies thereby contributing to viral immune evasion. Interacts and activates host macrophages and dendritic cells inducing up-regulation of cytokine transcription. This effect is mediated throught activation of host TLR4. In terms of biological role, responsible for binding to the receptor(s) on target cells. Interacts with CD209/DC-SIGN and CLEC4M/DC-SIGNR which act as cofactors for virus entry into dendritic cells (DCs) and endothelial cells. Binding to the macrophage specific lectin CLEC10A also seems to enhance virus infectivity. Interaction with FOLR1/folate receptor alpha may be a cofactor for virus entry in some cell types, although results are contradictory. Members of the Tyro3 receptor tyrosine kinase family also seem to be cell entry factors in filovirus infection. Once attached, the virions are internalized through clathrin-dependent endocytosis and/or macropinocytosis. After internalization of the virus into the endosomes of the host cell, proteolysis of GP1 by two cysteine proteases, CTSB/cathepsin B and CTSL/cathepsin L removes the glycan cap and allows GP1 binding to the host entry receptor NPC1. NPC1-binding, Ca(2+) and acidic pH induce a conformational change of GP2, which unmasks its fusion peptide and permit membranes fusion. Acts as a class I viral fusion protein. Under the current model, the protein has at least 3 conformational states: pre-fusion native state, pre-hairpin intermediate state, and post-fusion hairpin state. During viral and target cell membrane fusion, the coiled coil regions (heptad repeats) assume a trimer-of-hairpins structure, positioning the fusion peptide in close proximity to the C-terminal region of the ectodomain. The formation of this structure appears to drive apposition and subsequent fusion of viral and target cell membranes. Responsible for penetration of the virus into the cell cytoplasm by mediating the fusion of the membrane of the endocytosed virus particle with the endosomal membrane. Low pH in endosomes induces an irreversible conformational change in GP2, releasing the fusion hydrophobic peptide. The protein is Envelope glycoprotein (GP) of Sudan ebolavirus (strain Human/Uganda/Gulu/2000) (SEBOV).